We begin with the raw amino-acid sequence, 940 residues long: Pentatricopeptide repeat-containing protein At5g14770, mitochondrial (940 aa).

Residues 1-24 constitute a mitochondrion transit peptide; the sequence is MIMIRIWNNYKGKYRFFLSNCRSF. PPR repeat units follow at residues 59–93, 94–129, 130–161, 162–196, 197–231, 241–259, 260–294, 295–329, 330–364, 365–399, 400–434, 435–469, 470–504, 505–539, 540–573, 574–608, 609–643, 644–678, 679–713, 714–748, 749–783, 784–818, 819–853, and 854–891; these read YVSL…GVVP, DSRL…GVSP, DVFA…VISI, DTVT…GILP, DTVS…NLIT, NLHA…GFDP, DVVT…SVYP, NHVT…GIPV, DLVV…NQVP, NVVT…SVIP, NVVT…NVVP, NGFT…GVEE, NNYI…GVTL, DQIN…GMPW, DVVS…GIEP, DIAT…GIKP, SLMS…EIHP, NLTT…GIKL, SRQV…GFIP, DTVT…GISP, NVAT…GMRP, DDFT…GLVP, KTST…GVSP, and NTST…GLLK.

Belongs to the PPR family. P subfamily.

It localises to the mitochondrion. The sequence is that of Pentatricopeptide repeat-containing protein At5g14770, mitochondrial from Arabidopsis thaliana (Mouse-ear cress).